The following is a 138-amino-acid chain: Large ribosomal subunit protein uL16 (138 aa).

It belongs to the universal ribosomal protein uL16 family. In terms of assembly, part of the 50S ribosomal subunit.

Functionally, binds 23S rRNA and is also seen to make contacts with the A and possibly P site tRNAs. In Ureaplasma parvum serovar 3 (strain ATCC 27815 / 27 / NCTC 11736), this protein is Large ribosomal subunit protein uL16.